The following is a 251-amino-acid chain: Proteasome subunit alpha type-4-like (251 aa).

The protein belongs to the peptidase T1A family. In terms of assembly, the 26S proteasome consists of a 20S proteasome core and two 19S regulatory subunits. The 20S proteasome core is composed of 28 subunits that are arranged in four stacked rings, resulting in a barrel-shaped structure. The two end rings are each formed by seven alpha subunits, and the two central rings are each formed by seven beta subunits. The catalytic chamber with the active sites is on the inside of the barrel. Testis, prominent after meiosis II. After meiosis, predominantly localized to the haploid spermatid nuclei of the 64-cell cysts, remaining during the elongation and condensation of the spermatid nuclei. In mature, motile sperm, expression is seen exclusively in the sperm head.

Its subcellular location is the nucleus. In terms of biological role, the proteasome is a multicatalytic proteinase complex which is characterized by its ability to cleave peptides with Arg, Phe, Tyr, Leu, and Glu adjacent to the leaving group at neutral or slightly basic pH. The proteasome has an ATP-dependent proteolytic activity. This Drosophila melanogaster (Fruit fly) protein is Proteasome subunit alpha type-4-like (Prosalpha3T).